A 176-amino-acid polypeptide reads, in one-letter code: ATP synthase subunit b, chloroplastic (176 aa).

The helical transmembrane segment at 27–49 (ILNLAAVFALLAYVGTDFVSSLL) threads the bilayer.

It belongs to the ATPase B chain family. As to quaternary structure, F-type ATPases have 2 components, F(1) - the catalytic core - and F(0) - the membrane proton channel. F(1) has five subunits: alpha(3), beta(3), gamma(1), delta(1), epsilon(1). F(0) has four main subunits: a(1), b(1), b'(1) and c(10-14). The alpha and beta chains form an alternating ring which encloses part of the gamma chain. F(1) is attached to F(0) by a central stalk formed by the gamma and epsilon chains, while a peripheral stalk is formed by the delta, b and b' chains.

The protein localises to the plastid. Its subcellular location is the chloroplast thylakoid membrane. Its function is as follows. F(1)F(0) ATP synthase produces ATP from ADP in the presence of a proton or sodium gradient. F-type ATPases consist of two structural domains, F(1) containing the extramembraneous catalytic core and F(0) containing the membrane proton channel, linked together by a central stalk and a peripheral stalk. During catalysis, ATP synthesis in the catalytic domain of F(1) is coupled via a rotary mechanism of the central stalk subunits to proton translocation. Component of the F(0) channel, it forms part of the peripheral stalk, linking F(1) to F(0). This Nephroselmis olivacea (Green alga) protein is ATP synthase subunit b, chloroplastic.